A 32-amino-acid chain; its full sequence is Putative leucine-rich repeat protein PS14 (32 aa).

This chain is Putative leucine-rich repeat protein PS14, found in Pinus strobus (Eastern white pine).